A 208-amino-acid chain; its full sequence is Protein GrpE (208 aa).

Residues 1–62 (MTEKDESVKS…ETAVDPKDEE (62 aa)) form a disordered region. Residues 46 to 55 (SNEESSEETA) are compositionally biased toward acidic residues.

The protein belongs to the GrpE family. Homodimer.

The protein resides in the cytoplasm. Functionally, participates actively in the response to hyperosmotic and heat shock by preventing the aggregation of stress-denatured proteins, in association with DnaK and GrpE. It is the nucleotide exchange factor for DnaK and may function as a thermosensor. Unfolded proteins bind initially to DnaJ; upon interaction with the DnaJ-bound protein, DnaK hydrolyzes its bound ATP, resulting in the formation of a stable complex. GrpE releases ADP from DnaK; ATP binding to DnaK triggers the release of the substrate protein, thus completing the reaction cycle. Several rounds of ATP-dependent interactions between DnaJ, DnaK and GrpE are required for fully efficient folding. This Staphylococcus haemolyticus (strain JCSC1435) protein is Protein GrpE.